Consider the following 621-residue polypeptide: MAENADDDLNSNLLHAPYLTGDPQLDTAIGQWLRWDKNPKTKEQIENLLRNGMNKELRDRLCCRMTFGTAGLRSAMGAGFCYINDLTVIQSTQGMYKYLERCFSDFKQRGFVVGYDTRGQVTSSCSSQRLAKLTAAVLLAKDIPVYLFSRYVPTPFVPYAVQELKAVAGVMITASHNRKEDNGYKVYWETGAQITSPHDKEILKCIEECVEPWNDSWNDNLVDTSPLKKDPLQDICKKYMEDLKKICFYRDLNSKTTLKFVHTSFHGVGHDYVQLAFQVFGFKPPIPVPEQKDPDPDFSTVKCPNPEEGESVLELSLRLAEKENARIVLATDPDADRLAVAELQENGRWKVFTGNELAALFGWWMFDCWKKNKPNADVKNVYMLATTVSSKILKAIALKEGFHFEETLPGFKWIGSRIKDLLGNGKEVLFAFEESIGFLCGTSVLDKDGVSAAAVVAEMASFLDTRKVTLMEQLTKVYEIYGYHMSKTSYFLCYDPPTIKTIFERIRNFESPKEYPKFCGAFAILHVRDITTGYDSSQPNKKSVLPVSKNSQMITFTFQNGCVATLRTSGTEPKIKYYAEMCASPGQSDTTFLEEELKKLIDALIENFLEPSKNALVWRSV.

Alpha-D-glucose 1,6-bisphosphate is bound by residues R73 and S175. The active-site Phosphoserine intermediate is the S175. The Mg(2+) site is built by S175, D332, D334, and D336. S175 carries the post-translational modification Phosphoserine. 5 residues coordinate alpha-D-glucose 1,6-bisphosphate: D336, R337, E433, S435, and K447.

Belongs to the phosphohexose mutase family. In terms of tissue distribution, expressed at highest levels in the brain and testis, at intermediate levels in thymus, spleen, lung and skeletal muscle, and at lowest levels in kidney, liver and heart.

It localises to the cytoplasm. It is found in the cytosol. It catalyses the reaction (2R)-3-phospho-glyceroyl phosphate + alpha-D-glucose 1-phosphate = alpha-D-glucose 1,6-bisphosphate + (2R)-3-phosphoglycerate + H(+). The catalysed reaction is alpha-D-glucose 6-phosphate + (2R)-3-phospho-glyceroyl phosphate = alpha-D-glucose 1,6-bisphosphate + (2R)-3-phosphoglycerate + H(+). It carries out the reaction (2R)-3-phospho-glyceroyl phosphate + alpha-D-ribose 1-phosphate = alpha-D-ribose 1,5-bisphosphate + (2R)-3-phosphoglycerate + H(+). The enzyme catalyses 2-deoxy-alpha-D-ribose 1-phosphate + (2R)-3-phospho-glyceroyl phosphate = 2-deoxy-alpha-D-ribose 1,5-bisphosphate + (2R)-3-phosphoglycerate + H(+). It catalyses the reaction (2R)-3-phospho-glyceroyl phosphate + alpha-D-mannose 1-phosphate = alpha-D-mannose 1,6-bisphosphate + (2R)-3-phosphoglycerate + H(+). Glucose 1,6-bisphosphate synthase using 1,3-bisphosphoglycerate as a phosphate donor and a series of 1-phosphate sugars, including glucose 1-phosphate, mannose 1-phosphate, ribose 1-phosphate and deoxyribose 1-phosphate, as acceptors. In vitro, also exhibits very low phosphopentomutase and phosphoglucomutase activity which are most probably not physiologically relevant. In Mus musculus (Mouse), this protein is Glucose 1,6-bisphosphate synthase.